We begin with the raw amino-acid sequence, 680 residues long: Lipase 1 (680 aa).

The first 34 residues, 1 to 34 (MKSQNKYSIRKFSVGASSILIATLLFLSGGQAQA), serve as a signal peptide directing secretion. Residues 35–290 (AEKQVNMGNS…AKAKGDQTNK (256 aa)) constitute a propeptide that is removed on maturation. Disordered stretches follow at residues 39–58 (VNMG…GDQQ) and 82–260 (KNLH…KNGL). Polar residues predominate over residues 40–58 (NMGNSQEDTVTAQSIGDQQ). Residues 84–112 (LHNDKTISEENHRKTDDLNKDQLKDDKKS) show a composition bias toward basic and acidic residues. 2 stretches are compositionally biased toward polar residues: residues 162–193 (SQDL…SQRE) and 204–223 (QPQQ…FNNE). Basic and acidic residues predominate over residues 224 to 234 (QEVKPQKDEKT). Residues 235-246 (LSVSDLKNNQKS) are compositionally biased toward polar residues. The active-site Nucleophile is the serine 408. Aspartate 600 acts as the Charge relay system in catalysis. Aspartate 638 contributes to the Ca(2+) binding site. Residue histidine 639 is the Charge relay system of the active site. Ca(2+) contacts are provided by aspartate 641, aspartate 646, and aspartate 649.

This sequence belongs to the AB hydrolase superfamily. Lipase family.

It localises to the secreted. It catalyses the reaction a triacylglycerol + H2O = a diacylglycerol + a fatty acid + H(+). The polypeptide is Lipase 1 (lip1) (Staphylococcus aureus (strain MRSA252)).